Reading from the N-terminus, the 181-residue chain is Inner membrane-spanning protein YciB (181 aa).

A run of 5 helical transmembrane segments spans residues 10–30 (LIIF…GALI), 50–70 (MHLI…ILHD), 72–92 (SFIK…LGVS), 118–138 (VTWY…YVAF), and 148–168 (FKVF…VLYL).

It belongs to the YciB family.

It localises to the cell inner membrane. Its function is as follows. Plays a role in cell envelope biogenesis, maintenance of cell envelope integrity and membrane homeostasis. This chain is Inner membrane-spanning protein YciB, found in Shewanella halifaxensis (strain HAW-EB4).